A 544-amino-acid chain; its full sequence is Protein RDR1 (544 aa).

The segment at residues 14-40 is a DNA-binding region (zn(2)-C6 fungal-type); the sequence is CETCRELKRKCDGNQPCGACVRFEYDC. The interval 50–71 is disordered; sequence KRRKTVEQDKEAPLPSPPVHVD.

The protein resides in the nucleus. Functionally, may act as a transcriptional repressor of multidrug resistance genes. The chain is Protein RDR1 (RDR1) from Gibberella zeae (strain ATCC MYA-4620 / CBS 123657 / FGSC 9075 / NRRL 31084 / PH-1) (Wheat head blight fungus).